The following is a 139-amino-acid chain: Acidic phospholipase A2 Tgc-E6 (139 aa).

The first 16 residues, 1–16 (MRTLWIMAVLLLGVEG), serve as a signal peptide directing secretion. Disulfide bonds link Cys42/Cys132, Cys44/Cys60, Cys59/Cys111, Cys65/Cys139, Cys66/Cys104, Cys73/Cys97, and Cys91/Cys102. 3 residues coordinate Ca(2+): Tyr43, Gly45, and Gly47. His63 is a catalytic residue. Asp64 provides a ligand contact to Ca(2+). Asp105 is an active-site residue.

Belongs to the phospholipase A2 family. Group II subfamily. D49 sub-subfamily. Monomer. The cofactor is Ca(2+). Expressed by the venom gland.

Its subcellular location is the secreted. It catalyses the reaction a 1,2-diacyl-sn-glycero-3-phosphocholine + H2O = a 1-acyl-sn-glycero-3-phosphocholine + a fatty acid + H(+). Its function is as follows. Snake venom phospholipase A2 (PLA2) that inhibits the ADP-(IC(50)=272 nM) and collagen-induced (IC(50)=518 nM) human platelet aggregation in platelet rich plasma. Exhibits very high hydrolytic activities toward the synthetic lecithin, and prefers the anionic micelles (dPPC with deoxycholate) to the zwitterionic micelles (dPPC with Triton X-100). PLA2 catalyzes the calcium-dependent hydrolysis of the 2-acyl groups in 3-sn-phosphoglycerides. This Trimeresurus gracilis (Kikuchi habu) protein is Acidic phospholipase A2 Tgc-E6.